Consider the following 161-residue polypeptide: Nucleotide-binding protein Pfl01_4421 (161 aa).

The protein belongs to the YajQ family.

Its function is as follows. Nucleotide-binding protein. The chain is Nucleotide-binding protein Pfl01_4421 from Pseudomonas fluorescens (strain Pf0-1).